The following is a 101-amino-acid chain: Urease subunit beta (101 aa).

Belongs to the urease beta subunit family. As to quaternary structure, heterotrimer of UreA (gamma), UreB (beta) and UreC (alpha) subunits. Three heterotrimers associate to form the active enzyme.

The protein localises to the cytoplasm. The enzyme catalyses urea + 2 H2O + H(+) = hydrogencarbonate + 2 NH4(+). Its pathway is nitrogen metabolism; urea degradation; CO(2) and NH(3) from urea (urease route): step 1/1. The chain is Urease subunit beta from Rhodopseudomonas palustris (strain HaA2).